Consider the following 1647-residue polypeptide: Nucleoporin nup186 (1647 aa).

Belongs to the NUP186/NUP192/NUP205 family.

The protein resides in the cytoplasm. It is found in the nucleus. In terms of biological role, functions as a component of the nuclear pore complex (NPC). NPC components, collectively referred to as nucleoporins (NUPs), can play the role of both NPC structural components and of docking or interaction partners for transiently associated nuclear transport factors. Active directional transport is assured by both, a Phe-Gly (FG) repeat affinity gradient for these transport factors across the NPC and a transport cofactor concentration gradient across the nuclear envelope. The polypeptide is Nucleoporin nup186 (nup186) (Schizosaccharomyces pombe (strain 972 / ATCC 24843) (Fission yeast)).